Reading from the N-terminus, the 369-residue chain is Aminomethyltransferase (369 aa).

Belongs to the GcvT family. The glycine cleavage system is composed of four proteins: P, T, L and H.

It carries out the reaction N(6)-[(R)-S(8)-aminomethyldihydrolipoyl]-L-lysyl-[protein] + (6S)-5,6,7,8-tetrahydrofolate = N(6)-[(R)-dihydrolipoyl]-L-lysyl-[protein] + (6R)-5,10-methylene-5,6,7,8-tetrahydrofolate + NH4(+). Its function is as follows. The glycine cleavage system catalyzes the degradation of glycine. This Synechococcus sp. (strain CC9311) protein is Aminomethyltransferase.